The sequence spans 391 residues: Large ribosomal subunit protein uL3 (391 aa).

Residues methionine 1–arginine 10 show a composition bias toward basic and acidic residues. The tract at residues methionine 1 to proline 41 is disordered. Basic residues predominate over residues arginine 17–serine 31.

Belongs to the universal ribosomal protein uL3 family.

It is found in the cytoplasm. The L3 protein is a component of the large subunit of cytoplasmic ribosomes. The chain is Large ribosomal subunit protein uL3 (RPL3) from Tetrahymena thermophila.